A 359-amino-acid polypeptide reads, in one-letter code: Glycerol-1-phosphate dehydrogenase [NAD(P)+] (359 aa).

NAD(+) contacts are provided by residues G107 to D111 and T129 to S132. A substrate-binding site is contributed by D134. S138 contributes to the NAD(+) binding site. D181 lines the substrate pocket. Residues D181 and H261 each coordinate Zn(2+). H265 contacts substrate. H277 provides a ligand contact to Zn(2+).

This sequence belongs to the glycerol-1-phosphate dehydrogenase family. The cofactor is Zn(2+).

Its subcellular location is the cytoplasm. It catalyses the reaction sn-glycerol 1-phosphate + NAD(+) = dihydroxyacetone phosphate + NADH + H(+). The enzyme catalyses sn-glycerol 1-phosphate + NADP(+) = dihydroxyacetone phosphate + NADPH + H(+). It functions in the pathway membrane lipid metabolism; glycerophospholipid metabolism. Catalyzes the NAD(P)H-dependent reduction of dihydroxyacetonephosphate (DHAP or glycerone phosphate) to glycerol 1-phosphate (G1P). The G1P thus generated is used as the glycerophosphate backbone of phospholipids in the cellular membranes of Archaea. In Methanoregula boonei (strain DSM 21154 / JCM 14090 / 6A8), this protein is Glycerol-1-phosphate dehydrogenase [NAD(P)+].